The primary structure comprises 423 residues: Cyclin-dependent kinase 14 (423 aa).

The tract at residues 62–85 (VGKESPKVRRHSSPSSPTSPKFGK) is disordered. Residues 89 to 373 (YEKLEKLGEG…AQAALNHDYF (285 aa)) enclose the Protein kinase domain. Residues 95–103 (LGEGSYATV) and lysine 118 each bind ATP. Aspartate 210 acts as the Proton acceptor in catalysis.

This sequence belongs to the protein kinase superfamily. CMGC Ser/Thr protein kinase family. CDC2/CDKX subfamily. Interacts with ccny; ccny mediates its recruitment to the plasma membrane and promotes phosphorylation of lrp6.

It localises to the cell membrane. It carries out the reaction L-seryl-[protein] + ATP = O-phospho-L-seryl-[protein] + ADP + H(+). The enzyme catalyses L-threonyl-[protein] + ATP = O-phospho-L-threonyl-[protein] + ADP + H(+). Serine/threonine-protein kinase involved in the control of the eukaryotic cell cycle, whose activity is controlled by an associated cyclin. Acts as a cell-cycle regulator of Wnt signaling pathway during G2/M phase by mediating the phosphorylation of lrp6, leading to the activation of the Wnt signaling pathway. The polypeptide is Cyclin-dependent kinase 14 (cdk14) (Xenopus tropicalis (Western clawed frog)).